The following is a 127-amino-acid chain: MEVGLSPSACLRRIKLMEQAGVIRGYTALVDPTQSESTIAVIINITLERQTEEYLDKFEAAVRKHPEIRECYLMTGGSDYMLRVDVENAGAFERIHKEVLSTLPGVLRIHSSFSIRNVLAGRLKAKR.

Residues 1–46 form the HTH asnC-type domain; sequence MEVGLSPSACLRRIKLMEQAGVIRGYTALVDPTQSESTIAVIINIT.

Its function is as follows. Not known, symbiotically active. This is an uncharacterized protein from Sinorhizobium fredii (strain NBRC 101917 / NGR234).